We begin with the raw amino-acid sequence, 352 residues long: 4-hydroxy-2-oxovalerate aldolase (352 aa).

Residues 14–266 form the Pyruvate carboxyltransferase domain; the sequence is VRMTDTSLRD…KTGIDFFDIA (253 aa). Residue 22 to 23 coordinates substrate; it reads RD. Mn(2+) is bound at residue D23. H26 functions as the Proton acceptor in the catalytic mechanism. 2 residues coordinate substrate: S176 and H205. Residues H205 and H207 each contribute to the Mn(2+) site. Y296 is a binding site for substrate.

This sequence belongs to the 4-hydroxy-2-oxovalerate aldolase family.

It carries out the reaction (S)-4-hydroxy-2-oxopentanoate = acetaldehyde + pyruvate. The protein is 4-hydroxy-2-oxovalerate aldolase of Mycolicibacterium gilvum (strain PYR-GCK) (Mycobacterium gilvum (strain PYR-GCK)).